We begin with the raw amino-acid sequence, 546 residues long: Germacrene-D synthase (546 aa).

Asp-303, Asp-307, Asp-448, and Glu-456 together coordinate Mg(2+). The DDXXD motif motif lies at 303-307 (DDIYD).

Belongs to the terpene synthase family. Mg(2+) serves as cofactor. The cofactor is Mn(2+).

The catalysed reaction is (2E,6E)-farnesyl diphosphate = (-)-germacrene D + diphosphate. The protein operates within secondary metabolite biosynthesis; terpenoid biosynthesis. Sesquiterpene synthase that catalyzes the formation of germacrene D from trans,trans-farnesyl diphosphate (FPP). In Ocimum basilicum (Sweet basil), this protein is Germacrene-D synthase (GDS).